The chain runs to 263 residues: MNIYLIGILCIVGLIISQGSTANGSPLDDRFNDVNTINKKQFTEEEFSRLINSMLKKYIEDKNVDIRIIGNKKDKQPTQKTTPKPTTPKQINDGTSDKTSDTHTIKRTTPKPTTPKQINDGTSDKTSDTHTIKRTTPKPTTPKQINDGTSDKTSDTHTIKRTTPKPTTPKQINDGTSDKTSDTHTIKRTTPKPTTPKQINDGTSDKPKSIADIFLINKPKVPLWIVNPLYYMVEKFVQIMGYLLEDDDTLELNLPKYYYDKSI.

The N-terminal stretch at 1 to 21 is a signal peptide; it reads MNIYLIGILCIVGLIISQGST. A disordered region spans residues 70-207; the sequence is GNKKDKQPTQ…QINDGTSDKP (138 aa). Positions 78 to 90 are enriched in low complexity; sequence TQKTTPKPTTPKQ. A run of 5 repeats spans residues 81–107, 108–134, 135–161, 162–188, and 189–206. The tract at residues 81-189 is 5 X 27 AA tandem repeats; that stretch reads TTPKPTTPKQ…TSDTHTIKRT (109 aa). Composition is skewed to basic and acidic residues over residues 95-104, 122-131, 149-158, and 176-185; these read TSDKTSDTHT.

In Schistosoma mansoni (Blood fluke), this protein is Antigen 10-3.